The chain runs to 288 residues: Long chain fatty acid elongase 1 (288 aa).

Transmembrane regions (helical) follow at residues 39-59 (FFADHFDVTIQASILYMVVVF), 73-93 (LTIPLNIWNFILAAFSIAGAV), 126-146 (WVWLFMASKLFELVDTIFLVL), 150-170 (PLMFLHWYHHILTMIYAWYSH), 180-197 (GIYLNFVVHAFMYSYYFL), 217-237 (IVQFIISCAVLAHLGYLMHFT), and 247-267 (VFKLAVFMDTTYLALFVNFFL).

It belongs to the ELO family.

Its subcellular location is the membrane. It catalyses the reaction (6Z,9Z,12Z)-octadecatrienoyl-CoA + malonyl-CoA + H(+) = (8Z,11Z,14Z)-3-oxoeicosatrienoyl-CoA + CO2 + CoA. The catalysed reaction is (6Z,9Z,12Z,15Z)-octadecatetraenoyl-CoA + malonyl-CoA + H(+) = (8Z,11Z,14Z,17Z)-3-oxoicosatetraenoyl-CoA + CO2 + CoA. The enzyme catalyses (9Z)-hexadecenoyl-CoA + malonyl-CoA + H(+) = 3-oxo-(11Z)-octadecenoyl-CoA + CO2 + CoA. It participates in lipid metabolism; fatty acid biosynthesis. Its function is as follows. Catalyzes the first and rate-limiting reaction of the four reactions that constitute the long-chain fatty acids elongation cycle. Uses malonyl-CoA to add 2 carbons per cycle to the chain of long-chain fatty acids. Condensing enzyme that catalyzes the elongation of monounsaturated (MUFA) and polyunsaturated (PUFA) fatty acids that are involved in multiple biological processes as precursors of membrane lipids and lipid mediators. The sequence is that of Long chain fatty acid elongase 1 from Caenorhabditis elegans.